Here is a 299-residue protein sequence, read N- to C-terminus: Protoheme IX farnesyltransferase (299 aa).

Transmembrane regions (helical) follow at residues 27 to 47, 53 to 73, 97 to 117, 121 to 141, 149 to 169, 175 to 195, 222 to 242, 244 to 264, and 273 to 293; these read VVAL…HEHF, LIAL…NHLI, FNVL…LMLW, LTAY…TLYL, IVIA…SITG, AWVL…ALAI, ILLY…VGMA, YLYL…AIKL, and AIEM…ALLL.

The protein belongs to the UbiA prenyltransferase family. Protoheme IX farnesyltransferase subfamily.

Its subcellular location is the cell inner membrane. The enzyme catalyses heme b + (2E,6E)-farnesyl diphosphate + H2O = Fe(II)-heme o + diphosphate. It participates in porphyrin-containing compound metabolism; heme O biosynthesis; heme O from protoheme: step 1/1. Functionally, converts heme B (protoheme IX) to heme O by substitution of the vinyl group on carbon 2 of heme B porphyrin ring with a hydroxyethyl farnesyl side group. This chain is Protoheme IX farnesyltransferase, found in Vibrio vulnificus (strain CMCP6).